Reading from the N-terminus, the 413-residue chain is F-box protein CPR1 (413 aa).

Residues 1-48 (MATIPMDIVNDIFLRLPAKTLVRCRALSKPCYHLINDPDFIESHLHRV) enclose the F-box domain.

In terms of assembly, part of a SCF (ASK-cullin-F-box) protein ligase complex. Interacts with SKP1A/ASK1, SPK1B/ASK2, ASK9, ASK10, ASK11, ASK13, ASK14, ASK16, ASK17, ASK18 and ASK19. Interacts with TRAF1B. Expressed in seedling, root, stem, leaves, inflorescence and silique, especially in veins and trichomes.

The protein localises to the cytoplasm. It localises to the nucleus. It participates in protein modification; protein ubiquitination. In terms of biological role, component of SCF(ASK-cullin-F-box) E3 ubiquitin ligase complexes, which may mediate the ubiquitination and subsequent proteasomal degradation of target proteins. Regulates negatively both salicylic acid (SA)-dependent and SA-independent defense signaling. The polypeptide is F-box protein CPR1 (CPR1) (Arabidopsis thaliana (Mouse-ear cress)).